A 388-amino-acid chain; its full sequence is Succinate--CoA ligase [ADP-forming] subunit beta (388 aa).

The ATP-grasp domain occupies 9 to 244 (KQLFARYGLP…QSQEDPREAQ (236 aa)). ATP contacts are provided by residues K46, 53–55 (GRG), E99, T102, and E107. Residues N199 and D213 each contribute to the Mg(2+) site. Residues N264 and 321 to 323 (GIV) each bind substrate.

Belongs to the succinate/malate CoA ligase beta subunit family. Heterotetramer of two alpha and two beta subunits. The cofactor is Mg(2+).

The enzyme catalyses succinate + ATP + CoA = succinyl-CoA + ADP + phosphate. It catalyses the reaction GTP + succinate + CoA = succinyl-CoA + GDP + phosphate. It functions in the pathway carbohydrate metabolism; tricarboxylic acid cycle; succinate from succinyl-CoA (ligase route): step 1/1. Functionally, succinyl-CoA synthetase functions in the citric acid cycle (TCA), coupling the hydrolysis of succinyl-CoA to the synthesis of either ATP or GTP and thus represents the only step of substrate-level phosphorylation in the TCA. The beta subunit provides nucleotide specificity of the enzyme and binds the substrate succinate, while the binding sites for coenzyme A and phosphate are found in the alpha subunit. The sequence is that of Succinate--CoA ligase [ADP-forming] subunit beta from Enterobacter sp. (strain 638).